A 78-amino-acid polypeptide reads, in one-letter code: MKLALTFLLILMILPLTTGGKKSDNQALKRLGARKFNENLSELNSACDDAWETCAWSRTCCSRNCCRGICVSRYYECP.

Residues 1 to 19 form the signal peptide; it reads MKLALTFLLILMILPLTTG. Positions 20 to 33 are excised as a propeptide; that stretch reads GKKSDNQALKRLGA. 4 disulfide bridges follow: C47–C61, C54–C66, C60–C70, and C65–C77.

Belongs to the conotoxin I1 superfamily. As to expression, expressed by the venom duct.

Its subcellular location is the secreted. The sequence is that of Conotoxin Cl11.1 from Californiconus californicus (California cone).